The sequence spans 141 residues: MLTADDKKLIQATWDKVQGHQEDFGAEALQRMFITYPPTKTYFPHFDLSPGSDQVRGHGKKVVNALGNAVKSMDNLSQALSELSNLHAYNLRVDPVNFKLLSQCFQVVLAVHLGKEYTPEVHAAFDKFLSAVAAVLAEKYR.

Residues 1–141 enclose the Globin domain; that stretch reads MLTADDKKLI…VAAVLAEKYR (141 aa). Positions 58 and 87 each coordinate heme b.

Belongs to the globin family. As to quaternary structure, heterotetramer of two alpha-D chains and two beta chains. As to expression, red blood cells.

In terms of biological role, involved in oxygen transport from the lung to the various peripheral tissues. This is Hemoglobin subunit alpha-D (HBAD) from Aegypius monachus (Cinereous vulture).